The primary structure comprises 502 residues: C2H2-type transcription factor MSN2 (502 aa).

2 C2H2-type zinc fingers span residues 385–408 (FVCH…RSLH) and 414–436 (FACG…SRIH).

The protein resides in the nucleus. Key downstream transcription factor in the HOG1-MAPK pathway. Plays crucial roles in the regulation of growth, conidiation, trap development and fatty acid metabolism. Negatively regulates secondary metabolism such as arthrobotrisins biosynthesis.Also regulates autophagy and endocytosis. This Arthrobotrys oligospora (strain ATCC 24927 / CBS 115.81 / DSM 1491) (Nematode-trapping fungus) protein is C2H2-type transcription factor MSN2.